Reading from the N-terminus, the 1481-residue chain is MQRSPLEKASVVSKLFFSWTRPILKKGYRQRLELSDIYQIPSADSADNLSEKLEREWDRELASKKNPKLINALRRCFFWRFTFYGILLYLGEVTKAVQPLLLGRIIASYDPDNKTERSIAIYLGIGLCLLFIVRTLLLHPAIFGLHHIGMQMRIAMFSLIYKKTLKLSSRVLDKISIGQLVSLLSNNLNKFDEGLALAHFVWIAPLQVALLMGLIWELLQASAFCGLGFLIVLALFQAGLGRMMMKYRDQRAGKINERLVITSEMIENIQSVKAYCWEEAMEKMIENLRQTELKLTRKAAYVRYFNSSAFFFSGFFVVFLSVLPYALIKGIILRKIFTTISFCIVLRMAVTRQFPWAVQTWYDSLGAINKIQDFLQKQEYKTLEYNLTTTEVVMENVTAFWEEGFGELFEKAKQNNNNRKTSNDDNNLFFSNFSLLGTPVLKDINFKIERGQLLAVAGSTGAGKTSLLMMIMGELEPSEGKIKHSGRISFCSQFSWIMPGTIKENIIFGVSYDEYRYRSVIKACQLEEDISKFAEKDNIVLGEGGITLSGGQRARISLARAVYKDADLYLLDSPFGYLDVLTEKEIFESCVCKLMANKTRILVTSKMEHLKKADKILILHEGSSYFYGTFSELQNLRPDFSSKLMGYDSFDQFSSERRNSILTETLRRFSLEGDAPVSWTETKKQSFKQTGEFGEKRKNSILNSINSIRKFSIVQKTPLQMNGIEEDSDEPLERRLSLVPDSEQGEAILPRISVINTGPALQVRRRQSVLNMMTHSVNQGQSIHRKTTASTRKVSLAPQANLTELDIYSRRLSQETGLEISEEINEEDLKECFFDDMESIPAVTTWNTYLRYITLHKSLIFVLIWCLVIFLAEVAASLVVLWLLRNTPFQDKGNSTYSRNNSYAVIITNTSSYYVFYIYVGVADTLLALGFFRGLPLVHTLITVSKILHHKMLHSVLQAPMSTLNTLKAGGILNRFSKDIAILDDLLPLTIFDFIQLLLIVIGAIAVVSVLQPYIFLATVPVIAAFVLLRAYFLQTSQQLKQLESAGRSPIFTHLVTSLKGLWTLRAFGRQPYFETLFHKALNLHTANWFLYLSTLRWFQMRIEMIFVIFFIAVTFISILTTGEGEGTVGIILTLAMNIMSTLQWAVNSSIDVDSLMRSVSRVFKFIDMPTEEGKPTKSTKAYKNGQLSKVMIIENSHVKKDDIWPSGGQMTIKDLTAKYIEGGNAILENISFSISPGQRVGLLGRTGSGKSTLLSAFLRLLNTEGEIQIDGVSWDSITLQQWRKAFGVIPQKVFIFTGTFRKNLDPYEQWSDQEIWKVADEVGLRTVIEQFPGKLDFVLVDGGCVLSHGHKQLMCLARSVLSKAKILLLDEPSAHLDPVTYQIIRRALKQAFADCTVILCEHRIEAMLECQQFLVIEENKVRQYDSIQKLLNEKSLFRQAISHSDRVKLFPHRNSSKYKSRPQIASLKEETEEEVQETRL.

At 1-77 (MQRSPLEKAS…KLINALRRCF (77 aa)) the chain is on the cytoplasmic side. The helical transmembrane segment at 78–98 (FWRFTFYGILLYLGEVTKAVQ) threads the bilayer. The region spanning 81–365 (FTFYGILLYL…WAVQTWYDSL (285 aa)) is the ABC transmembrane type-1 1 domain. Topologically, residues 99–122 (PLLLGRIIASYDPDNKTERSIAIY) are extracellular. A helical transmembrane segment spans residues 123-146 (LGIGLCLLFIVRTLLLHPAIFGLH). Residues 147–195 (HIGMQMRIAMFSLIYKKTLKLSSRVLDKISIGQLVSLLSNNLNKFDEGL) are Cytoplasmic-facing. A helical membrane pass occupies residues 196 to 216 (ALAHFVWIAPLQVALLMGLIW). Topologically, residues 217–222 (ELLQAS) are extracellular. A helical transmembrane segment spans residues 223 to 243 (AFCGLGFLIVLALFQAGLGRM). The Cytoplasmic portion of the chain corresponds to 244-298 (MMKYRDQRAGKINERLVITSEMIENIQSVKAYCWEEAMEKMIENLRQTELKLTRK). A helical transmembrane segment spans residues 299–319 (AAYVRYFNSSAFFFSGFFVVF). The Extracellular portion of the chain corresponds to 320-339 (LSVLPYALIKGIILRKIFTT). The helical transmembrane segment at 340-358 (ISFCIVLRMAVTRQFPWAV) threads the bilayer. The Cytoplasmic segment spans residues 359–858 (QTWYDSLGAI…YLRYITLHKS (500 aa)). ATP contacts are provided by residues tryptophan 401, serine 434, 458 to 465 (GSTGAGKT), and glutamine 493. Positions 423 to 646 (NDDNNLFFSN…RPDFSSKLMG (224 aa)) constitute an ABC transporter 1 domain. Residue cysteine 524 is the site of S-palmitoyl cysteine attachment. A phosphoserine mark is found at serine 549 and serine 660. The tract at residues 654–831 (SSERRNSILT…EEINEEDLKE (178 aa)) is disordered R region. Serine 670 bears the Phosphoserine; by PKA mark. At serine 686 the chain carries Phosphoserine. Lysine 688 is covalently cross-linked (Glycyl lysine isopeptide (Lys-Gly) (interchain with G-Cter in ubiquitin)). A phosphoserine mark is found at serine 700 and serine 712. Threonine 717 is subject to Phosphothreonine. Residues serine 737, serine 753, serine 768, serine 790, serine 795, and serine 813 each carry the phosphoserine modification. Residues 859–879 (LIFVLIWCLVIFLAEVAASLV) traverse the membrane as a helical segment. One can recognise an ABC transmembrane type-1 2 domain in the interval 859–1155 (LIFVLIWCLV…AVNSSIDVDS (297 aa)). Residues 880-918 (VLWLLRNTPFQDKGNSTYSRNNSYAVIITNTSSYYVFYI) are Extracellular-facing. N-linked (GlcNAc...) asparagine glycans are attached at residues asparagine 894, asparagine 900, and asparagine 909. A discontinuously helical transmembrane segment spans residues 919-939 (YVGVADTLLALGFFRGLPLVH). Topologically, residues 940 to 990 (TLITVSKILHHKMLHSVLQAPMSTLNTLKAGGILNRFSKDIAILDDLLPLT) are cytoplasmic. Residues 991 to 1011 (IFDFIQLLLIVIGAIAVVSVL) traverse the membrane as a helical segment. Residues 1012–1013 (QP) lie on the Extracellular side of the membrane. The chain crosses the membrane as a helical span at residues 1014–1034 (YIFLATVPVIAAFVLLRAYFL). Residues 1035-1095 (QTSQQLKQLE…TANWFLYLST (61 aa)) lie on the Cytoplasmic side of the membrane. The helical transmembrane segment at 1096–1116 (LRWFQMRIEMIFVIFFIAVTF) threads the bilayer. Over 1117–1130 (ISILTTGEGEGTVG) the chain is Extracellular. The helical transmembrane segment at 1131–1151 (IILTLAMNIMSTLQWAVNSSI) threads the bilayer. Residues 1152 to 1481 (DVDSLMRSVS…TEEEVQETRL (330 aa)) lie on the Cytoplasmic side of the membrane. In terms of domain architecture, ABC transporter 2 spans 1211–1444 (MTIKDLTAKY…KSLFRQAISH (234 aa)). Residues tyrosine 1220 and 1245-1252 (GRTGSGKS) contribute to the ATP site. The segment at 1387–1481 (RALKQAFADC…TEEEVQETRL (95 aa)) is interaction with GORASP2. Cysteine 1396 is lipidated: S-palmitoyl cysteine. Residues serine 1445 and serine 1457 each carry the phosphoserine modification. Residues 1453–1481 (HRNSSKYKSRPQIASLKEETEEEVQETRL) form a disordered region. Residues 1471–1481 (ETEEEVQETRL) show a composition bias toward acidic residues. The short motif at 1479–1481 (TRL) is the PDZ-binding element.

Belongs to the ABC transporter superfamily. ABCC family. CFTR transporter (TC 3.A.1.202) subfamily. In terms of assembly, monomer; does not require oligomerization for channel activity. May form oligomers in the membrane. Interacts with SLC26A3, SLC26A6 and NHERF1. Interacts with SHANK2. Interacts with MYO6. Interacts (via C-terminus) with GOPC (via PDZ domain); this promotes CFTR internalization and thereby decreases channel activity. Interacts with SLC4A7 through NHERF1. Found in a complex with MYO5B and RAB11A. Interacts with ANO1. Interacts with SLC26A8. Interacts with AHCYL1; the interaction increases CFTR activity. Interacts with CSE1L. The core-glycosylated form interacts with GORASP2 (via PDZ GRASP-type 1 domain) in respone to ER stress. Interacts with MARCHF2; the interaction leads to CFTR ubiqtuitination and degradation. Interacts with ADGRG2. Post-translationally, N-glycosylated. Phosphorylated; cAMP treatment promotes phosphorylation and activates the channel. Dephosphorylation decreases the ATPase activity (in vitro). Phosphorylation at PKA sites activates the channel. Phosphorylation at PKC sites enhances the response to phosphorylation by PKA. Phosphorylated by AMPK; this inhibits channel activity. In terms of processing, ubiquitinated, leading to its degradation in the lysosome. Deubiquitination by USP10 in early endosomes enhances its endocytic recycling to the cell membrane. Ubiquitinated by RNF185 during ER stress. Ubiquitinated by MARCHF2.

Its subcellular location is the apical cell membrane. The protein localises to the early endosome membrane. It localises to the cell membrane. The protein resides in the recycling endosome membrane. It is found in the endoplasmic reticulum membrane. Its subcellular location is the nucleus. The catalysed reaction is ATP + H2O + closed Cl(-) channel = ADP + phosphate + open Cl(-) channel.. It carries out the reaction chloride(in) = chloride(out). It catalyses the reaction hydrogencarbonate(in) = hydrogencarbonate(out). The enzyme catalyses ATP + H2O = ADP + phosphate + H(+). Epithelial ion channel that plays an important role in the regulation of epithelial ion and water transport and fluid homeostasis. Mediates the transport of chloride ions across the cell membrane. Possesses an intrinsic ATPase activity and utilizes ATP to gate its channel; the passive flow of anions through the channel is gated by cycles of ATP binding and hydrolysis by the ATP-binding domains. The ion channel is also permeable to HCO(3)(-); selectivity depends on the extracellular chloride concentration. Exerts its function also by modulating the activity of other ion channels and transporters. Contributes to the regulation of the pH and the ion content of the epithelial fluid layer. Modulates the activity of the epithelial sodium channel (ENaC) complex, in part by regulating the cell surface expression of the ENaC complex. May regulate bicarbonate secretion and salvage in epithelial cells by regulating the transporter SLC4A7. Can inhibit the chloride channel activity of ANO1. Plays a role in the chloride and bicarbonate homeostasis during sperm epididymal maturation and capacitation. This chain is Cystic fibrosis transmembrane conductance regulator, found in Callithrix jacchus (White-tufted-ear marmoset).